Here is a 417-residue protein sequence, read N- to C-terminus: MPEANPFESLQEQLDDAGEFLDVNADVLERLKHPERVLETTLSVEMDDGTIETFKAFRSQFNGDRGPYKGGIRYHPGVTRDEVKALSGWMVYKTAVADIPYGGGKGGIILDPEEYSDSELERITRAFATELRPFIGEDKDVPAPDVNTGQREMNWIKDTYETLEDTTAPGVITGKALENGGSEGRVNATGRSTMFAAREVFDYLDRDLSDATVAVQGYGNAGSVAAKLIADQGADVVAVSDSSGAVHNPDGLDTRAVKAFKTETGSVSGYEGATEELSNEALLTMDVDLLVPAALENAIDEDLAHDVDADVVVEAANGPLTPDADDVLTERGVTVVPDILANAGGVTVSYFEWVQNRQRFQWTEDRVNEELEAIITDAFDAMTDAHEDAGTPNLRTAAYVVAVQRVVDAYEGSGSWP.

The active site involves lysine 105.

The protein belongs to the Glu/Leu/Phe/Val dehydrogenases family. Homohexamer.

The catalysed reaction is L-glutamate + NADP(+) + H2O = 2-oxoglutarate + NH4(+) + NADPH + H(+). The sequence is that of NADP-specific glutamate dehydrogenase A1 (gdhA1) from Halobacterium salinarum (Halobacterium halobium).